Reading from the N-terminus, the 588-residue chain is L-fucose isomerase (588 aa).

Residues Glu-335 and Asp-359 each act as proton acceptor in the active site. Glu-335, Asp-359, and His-525 together coordinate Mn(2+).

This sequence belongs to the L-fucose isomerase family. Mn(2+) serves as cofactor.

It is found in the cytoplasm. The enzyme catalyses L-fucose = L-fuculose. It participates in carbohydrate degradation; L-fucose degradation; L-lactaldehyde and glycerone phosphate from L-fucose: step 1/3. Converts the aldose L-fucose into the corresponding ketose L-fuculose. The polypeptide is L-fucose isomerase (Streptococcus pneumoniae (strain ATCC 700669 / Spain 23F-1)).